Reading from the N-terminus, the 249-residue chain is Proteasome subunit alpha type-7 (249 aa).

This sequence belongs to the peptidase T1A family. In terms of assembly, the 26S proteasome consists of a 20S proteasome core and two 19S regulatory subunits. The 20S proteasome core is composed of 28 subunits that are arranged in four stacked rings, resulting in a barrel-shaped structure. The two end rings are each formed by seven alpha subunits, and the two central rings are each formed by seven beta subunits. The catalytic chamber with the active sites is on the inside of the barrel.

It localises to the cytoplasm. The protein resides in the nucleus. Its function is as follows. The proteasome is a multicatalytic proteinase complex which is characterized by its ability to cleave peptides with Arg, Phe, Tyr, Leu, and Glu adjacent to the leaving group at neutral or slightly basic pH. The proteasome has an ATP-dependent proteolytic activity. This Cicer arietinum (Chickpea) protein is Proteasome subunit alpha type-7 (PAD1).